We begin with the raw amino-acid sequence, 148 residues long: D-aminoacyl-tRNA deacylase (148 aa).

The Gly-cisPro motif, important for rejection of L-amino acids motif lies at 137–138 (GP).

The protein belongs to the DTD family. In terms of assembly, homodimer.

It localises to the cytoplasm. It catalyses the reaction glycyl-tRNA(Ala) + H2O = tRNA(Ala) + glycine + H(+). It carries out the reaction a D-aminoacyl-tRNA + H2O = a tRNA + a D-alpha-amino acid + H(+). Functionally, an aminoacyl-tRNA editing enzyme that deacylates mischarged D-aminoacyl-tRNAs. Also deacylates mischarged glycyl-tRNA(Ala), protecting cells against glycine mischarging by AlaRS. Acts via tRNA-based rather than protein-based catalysis; rejects L-amino acids rather than detecting D-amino acids in the active site. By recycling D-aminoacyl-tRNA to D-amino acids and free tRNA molecules, this enzyme counteracts the toxicity associated with the formation of D-aminoacyl-tRNA entities in vivo and helps enforce protein L-homochirality. The sequence is that of D-aminoacyl-tRNA deacylase from Latilactobacillus sakei subsp. sakei (strain 23K) (Lactobacillus sakei subsp. sakei).